A 412-amino-acid chain; its full sequence is Multifunctional CCA protein (412 aa).

ATP-binding residues include G8 and R11. G8 and R11 together coordinate CTP. Mg(2+) is bound by residues E21 and D23. ATP contacts are provided by R91, R137, and R140. Positions 91, 137, and 140 each coordinate CTP. Residues 228–329 (CGIHTLMSLQ…WRLLQRLDVL (102 aa)) form the HD domain.

It belongs to the tRNA nucleotidyltransferase/poly(A) polymerase family. Bacterial CCA-adding enzyme type 1 subfamily. Monomer. Can also form homodimers and oligomers. Mg(2+) serves as cofactor. The cofactor is Ni(2+).

The catalysed reaction is a tRNA precursor + 2 CTP + ATP = a tRNA with a 3' CCA end + 3 diphosphate. It catalyses the reaction a tRNA with a 3' CCA end + 2 CTP + ATP = a tRNA with a 3' CCACCA end + 3 diphosphate. Its function is as follows. Catalyzes the addition and repair of the essential 3'-terminal CCA sequence in tRNAs without using a nucleic acid template. Adds these three nucleotides in the order of C, C, and A to the tRNA nucleotide-73, using CTP and ATP as substrates and producing inorganic pyrophosphate. tRNA 3'-terminal CCA addition is required both for tRNA processing and repair. Also involved in tRNA surveillance by mediating tandem CCA addition to generate a CCACCA at the 3' terminus of unstable tRNAs. While stable tRNAs receive only 3'-terminal CCA, unstable tRNAs are marked with CCACCA and rapidly degraded. This chain is Multifunctional CCA protein, found in Acinetobacter baumannii (strain AB307-0294).